Reading from the N-terminus, the 1083-residue chain is MSWDDAIEGVDRDTPGGRMPRAWNVAARLRAANDDISHAHVADGVPTYAELHCLSDFSFLRGASSAEQLFARAQHCGYSALAITDECSLAGIVRGLEASRVTGVRLIVGSEFTLIDGTRFVLLVENAHGYPQVCGLVTTARRAASKGAYRLGRADVEAQFRDVAPGVFALWLPGVQPQAEQGAWLQQVFGERAFLAVELHREQDDGARLQVLQALAQQLGMTAVASGDVHMAQRRERIVQDTLTAIRHTLPLAECGAHLFRNGERHLRTRRALGNIYPDALLQAAVALAQRCTFDISKISYTYPRELVPEGHTPTSYLRQLTEAGIRKRWPGGITAKVREDIEKELALIALKKYEAFFLTVQDVVRFAREQNILCQGRGSSANSAVCYALGITAVNPDETRLLMARFLSEKRDEPPDIDVDFEHERREEVLQYVYRKYGRERAALAATVICYRGKSAVRDVAKAFGLPPDQIALLANCYGWGNGETPMEQRIEEAGFDLANPLINKILLVTEHLRDHPRHLSQHVGGFVISDEPLSLLVPVENAAMADRTIIQWDKDDLETMKLLKVDCLALGMLTCIRKTLDLVRGHRGRDYSIATLPGEDLPTYKMIQRADTVGVFQIESRAQMAMLPRLKPAEFYDLVIEVAIVRPGPIQGDMVHPYLRRRQGREDVSYPSPAVEDILKPTLGVPLFQEQVMELLMHAADYTESEADNLRRSMAAWRRGGDMEQHRTRVRERMQGKGYASTFIDQIFEQIKGFGSYGFPQSHAASFAKLVYASCWLKRHEPAAFACGLLNAQPMGFYSASQIVQDARRGSPERERVEVLPVDVVHSDWDNTLVGGRPWRSAADPGEQPAIRLGMRQVAGLSDVVAQRIVAARTQRAFADIGDLCLRAALDEKARLALAEAGALQGMVGNRNAARWAMAGVEARRPLLPGSPEERPVAFEAPHAGEEILADYRSVGLSLRQHPMALLRPQMRQRRILGLRDLQGRPHGSGVHVAGLVTQRQRPATAKGTIFVTLEDEHGMINVIVWSHLALRRRRALLESRLLAVRGRWERVDGVEHLIAGDLHDLSDLLGDMQLPSRDFH.

Belongs to the DNA polymerase type-C family. DnaE2 subfamily.

The protein resides in the cytoplasm. It carries out the reaction DNA(n) + a 2'-deoxyribonucleoside 5'-triphosphate = DNA(n+1) + diphosphate. Functionally, DNA polymerase involved in damage-induced mutagenesis and translesion synthesis (TLS). It is not the major replicative DNA polymerase. The polypeptide is Error-prone DNA polymerase (Xanthomonas oryzae pv. oryzae (strain PXO99A)).